Consider the following 548-residue polypeptide: Poly(ADP-ribose) glycohydrolase 1 (548 aa).

The protein belongs to the poly(ADP-ribose) glycohydrolase family.

The catalysed reaction is [(1''-&gt;2')-ADP-alpha-D-ribose](n) + H2O = [(1''-&gt;2')-ADP-alpha-D-ribose](n-1) + ADP-D-ribose. Its function is as follows. Poly(ADP-ribose) synthesized after DNA damage is only present transiently and is rapidly degraded by poly(ADP-ribose) glycohydrolase. Involved in establishing period length of the circadian oscillator. May regulate post-translational poly(ADP-ribosyl)ation of an oscillator component. This chain is Poly(ADP-ribose) glycohydrolase 1 (PARG1), found in Arabidopsis thaliana (Mouse-ear cress).